The primary structure comprises 346 residues: Phenylalanine--tRNA ligase alpha subunit (346 aa).

Mg(2+) is bound at residue glutamate 261.

It belongs to the class-II aminoacyl-tRNA synthetase family. Phe-tRNA synthetase alpha subunit type 1 subfamily. As to quaternary structure, tetramer of two alpha and two beta subunits. Requires Mg(2+) as cofactor.

Its subcellular location is the cytoplasm. It catalyses the reaction tRNA(Phe) + L-phenylalanine + ATP = L-phenylalanyl-tRNA(Phe) + AMP + diphosphate + H(+). This chain is Phenylalanine--tRNA ligase alpha subunit, found in Streptococcus agalactiae serotype Ia (strain ATCC 27591 / A909 / CDC SS700).